Consider the following 192-residue polypeptide: UPF0312 protein YPK_1931 (192 aa).

A signal peptide spans Met1–Ala23.

Belongs to the UPF0312 family. Type 1 subfamily.

The protein resides in the periplasm. The polypeptide is UPF0312 protein YPK_1931 (Yersinia pseudotuberculosis serotype O:3 (strain YPIII)).